Here is a 514-residue protein sequence, read N- to C-terminus: Exoglucanase 1 (514 aa).

A signal peptide spans 1 to 17 (MYRKLAVISAFLATARA). Glutamine 18 is subject to Pyrrolidone carboxylic acid. The catalytic stretch occupies residues 18-453 (QSACTLQSET…GSTGNPSGGN (436 aa)). Disulfide bonds link cysteine 21–cysteine 89, cysteine 36–cysteine 42, cysteine 67–cysteine 88, cysteine 78–cysteine 84, cysteine 155–cysteine 414, cysteine 189–cysteine 227, cysteine 193–cysteine 226, cysteine 247–cysteine 273, cysteine 255–cysteine 260, and cysteine 278–cysteine 348. Asparagine 62 is a glycosylation site (N-linked (GlcNAc) asparagine). The active-site Nucleophile is glutamate 229. The Proton donor/acceptor role is filled by glutamate 234. Residue asparagine 287 is glycosylated (N-linked (GlcNAc...) (high mannose) asparagine). Residue asparagine 401 is glycosylated (N-linked (GlcNAc) asparagine). Polar residues predominate over residues 401 to 437 (NETSSTPGAVRGSCSTSSGVPAQVESQSPNAKVTFSN). Residues 401–481 (NETSSTPGAV…TGSSPGPTQS (81 aa)) are disordered. Positions 454–478 (PPGGNPPGTTTTRRPATTTGSSPGP) are linker. A compositionally biased stretch (low complexity) spans 460–479 (PGTTTTRRPATTTGSSPGPT). An O-linked (Man) threonine glycan is attached at threonine 462. Threonine 463, threonine 464, and threonine 465 each carry an O-linked (Man...) threonine glycan. Threonine 470 carries O-linked (Man) threonine glycosylation. 2 O-linked (Man...) threonine glycosylation sites follow: threonine 471 and threonine 472. 2 O-linked (Man) serine glycosylation sites follow: serine 474 and serine 475. Residues 478–514 (PTQSHYGQCGGIGYSGPTVCASGTTCQVLNPYYSQCL) enclose the CBM1 domain. The O-linked (Man) threonine glycan is linked to threonine 479. Serine 481 and serine 492 each carry an O-linked (Man) serine glycan. 2 cysteine pairs are disulfide-bonded: cysteine 486–cysteine 503 and cysteine 497–cysteine 513.

Belongs to the glycosyl hydrolase 7 (cellulase C) family. Post-translationally, N-glycosylated. A high mannose glycan is attached to Asn-287 (predominantly Man(8)GlcNAc(2)) and single GlcNAc occupancy is observed at Asn-62 and Asn-401 with some site heterogeneity depending on strains and fermentation conditions. O-glycosylated. Within the linker domain, all 8 threonines are variably glycosylated with between at least one, and up to three, mannose residues per site. All serines in this domain are at least partially glycosylated with a single mannose residue. O-glycosylation of the cellulase linker provides protection from proteolysis. Linker glycans also contribute to binding affinity of cellobiohydrolases to cellulose.

Its subcellular location is the secreted. The enzyme catalyses Hydrolysis of (1-&gt;4)-beta-D-glucosidic linkages in cellulose and cellotetraose, releasing cellobiose from the non-reducing ends of the chains.. Exocellobiohydrolases (CBH) that catalyzes the hydrolysis of 1,4-beta-D-glucosidic bonds in cellulose to release the disaccharide cellobiose. The degradation of cellulose involves an interplay between different cellulolytic enzymes. Hydrolysis starts with endoglucanases (EGs), which cut internal beta-1,4-glucosidic bonds in cellulose to reduce the polymerization degree of the substrate and create new chain ends for exocellobiohydrolases (CBHs). The CBHs release the disaccharide cellobiose from the non-reducing end of the cellulose polymer chain. Finally, beta-1,4-glucosidases hydrolyze the cellobiose and other short cello-oligosaccharides into glucose units. The chain is Exoglucanase 1 (cbh1) from Hypocrea jecorina (strain ATCC 56765 / BCRC 32924 / NRRL 11460 / Rut C-30) (Trichoderma reesei).